A 235-amino-acid chain; its full sequence is Sugar fermentation stimulation protein homolog (235 aa).

This sequence belongs to the SfsA family.

This chain is Sugar fermentation stimulation protein homolog, found in Aliivibrio salmonicida (strain LFI1238) (Vibrio salmonicida (strain LFI1238)).